The chain runs to 665 residues: Methionine--tRNA ligase (665 aa).

Positions 12-22 (YYPSGKLHIGS) match the 'HIGH' region motif. The 'KMSKS' region motif lies at 308–312 (KMSKS). Lys-311 serves as a coordination point for ATP. The tRNA-binding domain maps to 562–665 (TFDAVEIRVA…SSVPNGSIIG (104 aa)).

This sequence belongs to the class-I aminoacyl-tRNA synthetase family. MetG type 2B subfamily. As to quaternary structure, homodimer.

It is found in the cytoplasm. It catalyses the reaction tRNA(Met) + L-methionine + ATP = L-methionyl-tRNA(Met) + AMP + diphosphate. Is required not only for elongation of protein synthesis but also for the initiation of all mRNA translation through initiator tRNA(fMet) aminoacylation. The polypeptide is Methionine--tRNA ligase (metG) (Streptococcus pyogenes serotype M3 (strain SSI-1)).